The chain runs to 353 residues: Phosphate acyltransferase (353 aa).

The protein belongs to the PlsX family. In terms of assembly, homodimer. Probably interacts with PlsY.

The protein resides in the cytoplasm. The catalysed reaction is a fatty acyl-[ACP] + phosphate = an acyl phosphate + holo-[ACP]. Its pathway is lipid metabolism; phospholipid metabolism. Catalyzes the reversible formation of acyl-phosphate (acyl-PO(4)) from acyl-[acyl-carrier-protein] (acyl-ACP). This enzyme utilizes acyl-ACP as fatty acyl donor, but not acyl-CoA. This is Phosphate acyltransferase from Bradyrhizobium diazoefficiens (strain JCM 10833 / BCRC 13528 / IAM 13628 / NBRC 14792 / USDA 110).